A 250-amino-acid chain; its full sequence is N-acyl homoserine lactonase (250 aa).

Residues histidine 104, histidine 106, aspartate 108, histidine 109, histidine 169, aspartate 191, and histidine 235 each coordinate Zn(2+).

Belongs to the metallo-beta-lactamase superfamily. As to quaternary structure, monomer. Requires Zn(2+) as cofactor.

It catalyses the reaction an N-acyl-L-homoserine lactone + H2O = an N-acyl-L-homoserine + H(+). With respect to regulation, completely inhibited by Cu(2+) and Ag(+). Partially inhibited by Cr(2+), Pb(2+) and Fe(2+). Mg(2+), Ca(2+), Mn(2+), Co(2+), Ni(2+), Zn(2+) and Cd(2+) have no effect on activity. The chelating agents EDTA, 2,2'bipyridine and o-phenanthroline have no effect on enzyme activity. Its function is as follows. Hydrolyzes acyl homoserine lactones with varying lengths of acyl chains, with a slight preference for substrates without 3-oxo substitution at the C3 position. Has only residual activity towards non-acyl lactones, and no activity towards non-cyclic esters. This chain is N-acyl homoserine lactonase, found in Bacillus sp.